Here is a 445-residue protein sequence, read N- to C-terminus: Chromosome partition protein MukF (445 aa).

A leucine-zipper region spans residues 213–241 (LSETSNTLKELQDTLQAAGDELQTQILDI).

This sequence belongs to the MukF family. As to quaternary structure, interacts, and probably forms a ternary complex, with MukE and MukB via its C-terminal region. The complex formation is stimulated by calcium or magnesium. It is required for an interaction between MukE and MukB.

The protein localises to the cytoplasm. It is found in the nucleoid. In terms of biological role, involved in chromosome condensation, segregation and cell cycle progression. May participate in facilitating chromosome segregation by condensation DNA from both sides of a centrally located replisome during cell division. Not required for mini-F plasmid partitioning. Probably acts via its interaction with MukB and MukE. Overexpression results in anucleate cells. It has a calcium binding activity. The protein is Chromosome partition protein MukF of Vibrio vulnificus (strain CMCP6).